The primary structure comprises 348 residues: Small ribosomal subunit biogenesis GTPase RsgA (348 aa).

A disordered region spans residues 1-32 (MAKQKLTQNQKRRIHSNNAKALDRHRRQTKKQ). A CP-type G domain is found at 106-274 (KNELSRPDYY…LIDSPGIREF (169 aa)). GTP is bound by residues 162–165 (NKID) and 216–224 (GQSGVGKSS). Zn(2+) is bound by residues Cys-298, Cys-303, His-305, and Cys-311.

The protein belongs to the TRAFAC class YlqF/YawG GTPase family. RsgA subfamily. Monomer. Associates with 30S ribosomal subunit, binds 16S rRNA. Zn(2+) serves as cofactor.

Its subcellular location is the cytoplasm. One of several proteins that assist in the late maturation steps of the functional core of the 30S ribosomal subunit. Helps release RbfA from mature subunits. May play a role in the assembly of ribosomal proteins into the subunit. Circularly permuted GTPase that catalyzes slow GTP hydrolysis, GTPase activity is stimulated by the 30S ribosomal subunit. The protein is Small ribosomal subunit biogenesis GTPase RsgA of Actinobacillus succinogenes (strain ATCC 55618 / DSM 22257 / CCUG 43843 / 130Z).